Consider the following 369-residue polypeptide: MHGESPIKRRESRKIWVGSVPVGGDAPIAVQSMTNSDTNDVAATVAQINRLEAAGVDIVRISVPDMDAAEAFGRIKQLVKVPLVADIHFDYRIALRVAELGVDCLRINPGNIGREDRVRAVVDAARDRGIPIRIGVNAGSLEKDLQKKYGEPTPEALVESALRHVEHLERLNFKDFKVSVKASDVFMAVAAYRLLAKQIVQPLHLGITEAGGLRSGTVKSAVGLGMLLAEGIGDTIRISLAADPVEEVKVGYDILKSLRLRSRGINFIACPSCSRQNFDVVKTMNELEGRLEDLLVPLDVAVIGCVVNGPGEAKEAHIGLTGGTPNLIYIDGKPAQKLTNDNLVDELERLIREKAAEKTAADASVIVRG.

Positions 270, 273, 305, and 312 each coordinate [4Fe-4S] cluster.

The protein belongs to the IspG family. The cofactor is [4Fe-4S] cluster.

It catalyses the reaction (2E)-4-hydroxy-3-methylbut-2-enyl diphosphate + oxidized [flavodoxin] + H2O + 2 H(+) = 2-C-methyl-D-erythritol 2,4-cyclic diphosphate + reduced [flavodoxin]. It participates in isoprenoid biosynthesis; isopentenyl diphosphate biosynthesis via DXP pathway; isopentenyl diphosphate from 1-deoxy-D-xylulose 5-phosphate: step 5/6. Converts 2C-methyl-D-erythritol 2,4-cyclodiphosphate (ME-2,4cPP) into 1-hydroxy-2-methyl-2-(E)-butenyl 4-diphosphate. The protein is 4-hydroxy-3-methylbut-2-en-1-yl diphosphate synthase (flavodoxin) of Pseudomonas syringae pv. tomato (strain ATCC BAA-871 / DC3000).